We begin with the raw amino-acid sequence, 885 residues long: Insulin receptor substrate 1-A (885 aa).

Positions 1 to 56 constitute an IRS-type PTB domain; it reads MNIRRCGHSENFFFIEVGRSAVTGAGEFWMQVDDSVVAQNMHETILEAMKALSDEF. The disordered stretch occupies residues 56–225; that stretch reads FRPRSKSQSS…GGFISSDEYG (170 aa). Low complexity-rich tracts occupy residues 61-75, 99-109, 176-197, and 205-217; these read KSQSSSNCSNPISVP, SATATSPAGGA, SPSATSPVSLSSSSTSGHGSTS, and SSASISGSPSDGG. Position 104 is a phosphoserine (Ser-104). Residue Tyr-257 is modified to Phosphotyrosine; by INSR. The YXXM motif 1 motif lies at 257–260; that stretch reads YICM. Composition is skewed to polar residues over residues 263 to 276 and 296 to 313; these read SSSHLQRGPQQRYQ and SSGTSPPTVSHQKTPSQS. Disordered stretches follow at residues 263–282 and 293–313; these read SSSHLQRGPQQRYQPSRGEE and RTHSSGTSPPTVSHQKTPSQS. 5 consecutive short sequence motifs (YXXM motif) follow at residues 318–321, 364–367, 381–384, 409–412, and 451–454; these read YTEM, YMPM, YMMM, and YINM. Tyr-364 and Tyr-381 each carry phosphotyrosine; by INSR. Tyr-409 carries the post-translational modification Phosphotyrosine. Residues 501 to 581 form a disordered region; the sequence is NLRISANSGH…LPPEPKSPGE (81 aa). Residues 504-515 are compositionally biased toward polar residues; the sequence is ISANSGHNLYTE. Residues 516 to 526 are compositionally biased toward low complexity; that stretch reads DSSSSSTSSDS. Phosphotyrosine; by INSR is present on residues Tyr-582 and Tyr-620. Residues 582 to 584 form a GRB2-binding region; sequence YVN. Positions 620-623 match the YXXM motif 7 motif; sequence YMNM. Polar residues predominate over residues 637–660; the sequence is TSSYEPPNKPVNSVCPTETCSSSR. The segment at 637-665 is disordered; sequence TSSYEPPNKPVNSVCPTETCSSSRPPIRG. At Tyr-672 the chain carries Phosphotyrosine; by INSR. 2 short sequence motifs (YXXM motif) span residues 672-675 and 706-709; these read YMSM and YAEM. The segment at 732-803 is disordered; sequence ASRSSLLGQG…SGEDVKRHSS (72 aa). Polar residues-rich tracts occupy residues 743 to 758 and 777 to 792; these read GPSAFTRVSLSPNRNP and ETFSSTPTTARVTTGP. Residues Tyr-834 and Tyr-866 each carry the phosphotyrosine; by INSR modification.

As to quaternary structure, interacts with the NPXY motif of tyrosine-phosphorylated igf1r and insr via the PTB domain. Binds to phosphatidylinositol 3-kinase p85 subunit at a low level in vitro prior to phosphorylation. Binding is greatly enhanced following tyrosine phosphorylation by insr and probably occurs via the phosphorylated YXXM motifs. In terms of processing, phosphorylation of Tyr-582 is required for grb2-binding.

Its function is as follows. May mediate the control of various cellular processes by insulin. When phosphorylated by the insulin receptor binds specifically to various cellular proteins containing SH2 domains such as phosphatidylinositol 3-kinase p85 subunit or grb2. Activates phosphatidylinositol 3-kinase when bound to the regulatory p85 subunit. This Xenopus laevis (African clawed frog) protein is Insulin receptor substrate 1-A (irs1-a).